The following is a 554-amino-acid chain: Valerianol synthase TPS1F (554 aa).

Mg(2+)-binding residues include Asp307 and Asp311. Positions 326-330 match the DDXXD motif motif; it reads VQRWD. Positions 452, 456, and 460 each coordinate Mg(2+).

Belongs to the terpene synthase family. Mg(2+) serves as cofactor.

It carries out the reaction (2E,6E)-farnesyl diphosphate + H2O = valerianol + diphosphate. It participates in secondary metabolite biosynthesis; terpenoid biosynthesis. In terms of biological role, terpene synthase that catalyzes the biosynthesis of the terpene valerianol, which is a volatile compound of floral scent. The sequence is that of Valerianol synthase TPS1F from Camellia hiemalis (Camellia).